The primary structure comprises 169 residues: NADH-quinone oxidoreductase subunit I (169 aa).

4Fe-4S ferredoxin-type domains are found at residues 60-90 and 100-129; these read LRRY…IEAE and TRYD…EGPN. [4Fe-4S] cluster contacts are provided by Cys70, Cys73, Cys76, Cys80, Cys109, Cys112, Cys115, and Cys119.

This sequence belongs to the complex I 23 kDa subunit family. As to quaternary structure, NDH-1 is composed of 14 different subunits. Subunits NuoA, H, J, K, L, M, N constitute the membrane sector of the complex. It depends on [4Fe-4S] cluster as a cofactor.

The protein localises to the cell membrane. The enzyme catalyses a quinone + NADH + 5 H(+)(in) = a quinol + NAD(+) + 4 H(+)(out). Its function is as follows. NDH-1 shuttles electrons from NADH, via FMN and iron-sulfur (Fe-S) centers, to quinones in the respiratory chain. The immediate electron acceptor for the enzyme in this species is believed to be ubiquinone. Couples the redox reaction to proton translocation (for every two electrons transferred, four hydrogen ions are translocated across the cytoplasmic membrane), and thus conserves the redox energy in a proton gradient. This chain is NADH-quinone oxidoreductase subunit I, found in Wolbachia pipientis wMel.